The primary structure comprises 413 residues: S-adenosylmethionine synthase (413 aa).

His-15 is a binding site for ATP. Asp-17 serves as a coordination point for Mg(2+). Glu-43 lines the K(+) pocket. L-methionine contacts are provided by Glu-56 and Gln-100. The flexible loop stretch occupies residues 100-110; it reads QSPDISQGVND. ATP contacts are provided by residues 171-173, 248-249, Asp-257, 263-264, Ala-280, and Lys-284; these read DGK, KF, and RK. L-methionine is bound at residue Asp-257. An L-methionine-binding site is contributed by Lys-288.

It belongs to the AdoMet synthase family. As to quaternary structure, homotetramer; dimer of dimers. The cofactor is Mg(2+). It depends on K(+) as a cofactor.

The protein resides in the cytoplasm. The enzyme catalyses L-methionine + ATP + H2O = S-adenosyl-L-methionine + phosphate + diphosphate. It participates in amino-acid biosynthesis; S-adenosyl-L-methionine biosynthesis; S-adenosyl-L-methionine from L-methionine: step 1/1. Functionally, catalyzes the formation of S-adenosylmethionine (AdoMet) from methionine and ATP. The overall synthetic reaction is composed of two sequential steps, AdoMet formation and the subsequent tripolyphosphate hydrolysis which occurs prior to release of AdoMet from the enzyme. The chain is S-adenosylmethionine synthase from Prochlorococcus marinus (strain MIT 9301).